An 863-amino-acid polypeptide reads, in one-letter code: Leucine-rich repeat and death domain-containing protein 1 (863 aa).

Disordered stretches follow at residues 1–37 (MSEK…KETS) and 51–100 (SSNQ…SQSL). The span at 88–100 (SETSTRTETSQSL) shows a compositional bias: low complexity. LRR repeat units lie at residues 143-166 (CKDN…ILKI), 167-189 (KYVK…DSGD), 190-213 (LLGL…IQLL), 214-236 (HNLR…ISQL), 238-259 (NIRQ…LECL), 260-282 (GNLE…LPSL), 284-305 (YLRV…LCFL), 306-328 (PKLI…IREL), 329-351 (KNLE…IFQL), 353-374 (KIKE…IENF), 375-397 (RELR…ICCC), 398-420 (AMLE…IHKL), 422-443 (NLRK…ISHL), 445-466 (NICS…IKNC), 468-489 (KIIK…LCAL), 490-513 (DSLY…SFSK), 515-535 (LLHL…FCSL), 536-558 (INLK…ISNM), 560-581 (SLHV…LCTL), 582-604 (ENLR…ICNL), 606-627 (RIQK…LCQL), 630-653 (LEQL…LSNM), 654-676 (TQLK…IGEL), 678-699 (NLVS…LLSL), 700-722 (NDLQ…IYNL), and 724-745 (SLKE…ICKG). Residues 767–855 (EKIFKIVANN…EIMDKITALN (89 aa)) form the Death domain. Residues 856-863 (LFTRAIKF) form an LRR 27 repeat.

The sequence is that of Leucine-rich repeat and death domain-containing protein 1 (LRRD1) from Macaca fascicularis (Crab-eating macaque).